A 53-amino-acid chain; its full sequence is UPF0391 membrane protein Bxeno_A2958 (53 aa).

The next 2 membrane-spanning stretches (helical) occupy residues Ala5–Ala25 and Ile30–Val50.

The protein belongs to the UPF0391 family.

It is found in the cell membrane. The sequence is that of UPF0391 membrane protein Bxeno_A2958 from Paraburkholderia xenovorans (strain LB400).